Here is a 1480-residue protein sequence, read N- to C-terminus: Nonribosomal peptide synthetase inpA (1480 aa).

Over residues methionine 1–serine 17 the composition is skewed to low complexity. The disordered stretch occupies residues methionine 1–serine 24. Residues valine 44 to glutamine 458 are condensation. Residues glutamine 479–arginine 871 form an adenylation region. The Carrier domain occupies aspartate 1003 to histidine 1082. Serine 1041 is modified (O-(pantetheine 4'-phosphoryl)serine). A thioesterase (TE) domain region spans residues lysine 1117 to methionine 1436.

This sequence belongs to the NRP synthetase family.

It functions in the pathway secondary metabolite biosynthesis. In terms of biological role, nonribosomal peptide synthetase; part of the inp gene cluster that mediates the biosynthesis of fellutamide B, a mycotoxin that acts as a proteasome inhibitor. In the first step of fellutabmide B biosynthesis, inpC activates 3-hydroxydodecanoic acid to generate 3-hydroxydodecanoyl-AMP that is then loaded onto the T0 domain of inpB. The 3-hydroxydodecanoyl-S-phosphopantetheinyl-T0 is sequentially extended with L-Asn and L-Gln by the two CAT modules of inpB. The linear lipodipeptide from inpB is then transferred onto inpA for the addition of the third amino acid, L-Leu. Reductive releasing of the lipotripeptide by the TE domain of inpA produces (2S)-fellutamide B. InpF might be involved in the release and transfer of the lipodipeptide from inpB to inpA. The inp cluster-encoded proteasome subunit inpE confers resistance to internally produced fellutamides. The MFS efflux transporter inpD may contribute to fellutamide resistance as well. The sequence is that of Nonribosomal peptide synthetase inpA from Emericella nidulans (strain FGSC A4 / ATCC 38163 / CBS 112.46 / NRRL 194 / M139) (Aspergillus nidulans).